We begin with the raw amino-acid sequence, 186 residues long: FMN reductase (NADPH) (186 aa).

The protein belongs to the SsuE family.

The enzyme catalyses FMNH2 + NADP(+) = FMN + NADPH + 2 H(+). This Pseudomonas aeruginosa (strain ATCC 15692 / DSM 22644 / CIP 104116 / JCM 14847 / LMG 12228 / 1C / PRS 101 / PAO1) protein is FMN reductase (NADPH) (msuE).